The primary structure comprises 215 residues: Cytochrome b6 (215 aa).

The chain crosses the membrane as a helical span at residues 32–52 (IFYCFGGITLTCFLIQVATGF). C35 is a heme c binding site. Heme b is bound by residues H86 and H100. The next 3 membrane-spanning stretches (helical) occupy residues 90 to 110 (ASMM…TGGF), 116 to 136 (LTWV…VTGY), and 186 to 206 (LHTF…FLMI). Residues H187 and H202 each contribute to the heme b site.

The protein belongs to the cytochrome b family. PetB subfamily. As to quaternary structure, the 4 large subunits of the cytochrome b6-f complex are cytochrome b6, subunit IV (17 kDa polypeptide, PetD), cytochrome f and the Rieske protein, while the 4 small subunits are PetG, PetL, PetM and PetN. The complex functions as a dimer. Requires heme b as cofactor. It depends on heme c as a cofactor.

It is found in the plastid. Its subcellular location is the chloroplast thylakoid membrane. Its function is as follows. Component of the cytochrome b6-f complex, which mediates electron transfer between photosystem II (PSII) and photosystem I (PSI), cyclic electron flow around PSI, and state transitions. The polypeptide is Cytochrome b6 (Nephroselmis olivacea (Green alga)).